Consider the following 126-residue polypeptide: Methylglyoxal synthase (126 aa).

The 126-residue stretch at 1-126 (MADRKCLALI…AEQLIDFRRN (126 aa)) folds into the MGS-like domain. Substrate contacts are provided by residues His-12, Lys-16, 38–41 (TGTT), and 59–60 (SG). Catalysis depends on Asp-65, which acts as the Proton donor/acceptor. Substrate is bound at residue His-92.

Belongs to the methylglyoxal synthase family.

The enzyme catalyses dihydroxyacetone phosphate = methylglyoxal + phosphate. In terms of biological role, catalyzes the formation of methylglyoxal from dihydroxyacetone phosphate. The polypeptide is Methylglyoxal synthase (Rhizobium meliloti (strain 1021) (Ensifer meliloti)).